A 332-amino-acid polypeptide reads, in one-letter code: MPLEAQDAVYVALELALAALSVTGNVLVCAAVGTSSALQTPTNYFLVSLAAADVAVGLFAIPFAVTISLGFCTDFHSCLFLACFVLVLTQSSIFSLLAVAVDRYLAVRVPLRYKSLVTGARARGVIAALWVLAFGIGLTPFLGWNDRKIATNCTEPGDAATNVSCCLIRCLFENVVPMSYMVYFNFFGCVLPPLLIMLVIYVKIFLVACRQLQRTELMDHSRTVLQREIHAAKSLALIVGIFALCWLPVHTINCASLFQPTWAKVKPKWAINTAILLSHANSAVNPIVYAYRNRDFRYTFHKIISRYILCRTHILKSGEGQVGSQPTLQLGL.

Residues 1-8 (MPLEAQDA) are Extracellular-facing. A helical transmembrane segment spans residues 9 to 33 (VYVALELALAALSVTGNVLVCAAVG). The Cytoplasmic portion of the chain corresponds to 34 to 43 (TSSALQTPTN). The chain crosses the membrane as a helical span at residues 44 to 67 (YFLVSLAAADVAVGLFAIPFAVTI). At 68–78 (SLGFCTDFHSC) the chain is on the extracellular side. A disulfide bridge connects residues cysteine 78 and cysteine 170. Residues 79–101 (LFLACFVLVLTQSSIFSLLAVAV) form a helical membrane-spanning segment. Residues 102–121 (DRYLAVRVPLRYKSLVTGAR) are Cytoplasmic-facing. Residues 122-144 (ARGVIAALWVLAFGIGLTPFLGW) traverse the membrane as a helical segment. Topologically, residues 145–177 (NDRKIATNCTEPGDAATNVSCCLIRCLFENVVP) are extracellular. Asparagine 152 and asparagine 162 each carry an N-linked (GlcNAc...) asparagine glycan. Glutamate 173 provides a ligand contact to adenosine. A helical transmembrane segment spans residues 178-202 (MSYMVYFNFFGCVLPPLLIMLVIYV). Residues 203–234 (KIFLVACRQLQRTELMDHSRTVLQREIHAAKS) lie on the Cytoplasmic side of the membrane. Residues 235-258 (LALIVGIFALCWLPVHTINCASLF) form a helical membrane-spanning segment. Residue asparagine 253 participates in adenosine binding. Topologically, residues 259-266 (QPTWAKVK) are extracellular. The helical transmembrane segment at 267–290 (PKWAINTAILLSHANSAVNPIVYA) threads the bilayer. Serine 278 and histidine 279 together coordinate adenosine. Topologically, residues 291–332 (YRNRDFRYTFHKIISRYILCRTHILKSGEGQVGSQPTLQLGL) are cytoplasmic. Cysteine 310 carries S-palmitoyl cysteine lipidation.

This sequence belongs to the G-protein coupled receptor 1 family.

It is found in the cell membrane. In terms of biological role, receptor for adenosine. The activity of this receptor is mediated by G proteins which activate adenylyl cyclase. The sequence is that of Adenosine receptor A2b (ADORA2B) from Bos taurus (Bovine).